The chain runs to 100 residues: Omega-hexatoxin-Asp2b (100 aa).

The signal sequence occupies residues 1-23; that stretch reads MKFSKLSITLAVILTQAVFVLCG. Positions 24-55 are excised as a propeptide; the sequence is MKNEDFMEKGLESNELHDAIKKPVNSGKPDTE. 3 disulfides stabilise this stretch: cysteine 60–cysteine 73, cysteine 66–cysteine 79, and cysteine 72–cysteine 84.

It belongs to the neurotoxin 15 family. 02 (omega-actx) subfamily. As to expression, expressed by the venom gland.

It is found in the secreted. Functionally, potent inhibitor of insect, but not mammalian, voltage-gated calcium channels (Cav). In Atrax sp. (strain Illawarra) (Funnel-web spider), this protein is Omega-hexatoxin-Asp2b.